The sequence spans 224 residues: Thymidylate kinase (224 aa).

Gly-7–Ser-14 lines the ATP pocket.

It belongs to the thymidylate kinase family.

It catalyses the reaction dTMP + ATP = dTDP + ADP. Functionally, phosphorylation of dTMP to form dTDP in both de novo and salvage pathways of dTTP synthesis. The polypeptide is Thymidylate kinase (Nitratidesulfovibrio vulgaris (strain DP4) (Desulfovibrio vulgaris)).